The sequence spans 82 residues: U-actitoxin-Avd3k (82 aa).

Residues 1-16 form the signal peptide; sequence MVFLLCFFLVADVSYG. The 51-residue stretch at 21-71 folds into the BPTI/Kunitz inhibitor domain; that stretch reads CLLPMDVGRCRARHPRYYYNSSSKRCEKFIYGGCRGNANNFITKKECEKVC. Cystine bridges form between Cys21–Cys71, Cys30–Cys54, and Cys46–Cys67. A propeptide spanning residues 76–82 is cleaved from the precursor; it reads RDSPKEN.

It belongs to the venom Kunitz-type family. Sea anemone type 2 potassium channel toxin subfamily.

It localises to the secreted. It is found in the nematocyst. Dual-function toxin that inhibits both the serine protease trypsin and voltage-gated potassium channels Kv1.2/KCNA2. In Anemonia viridis (Snakelocks anemone), this protein is U-actitoxin-Avd3k.